Consider the following 502-residue polypeptide: ATP synthase subunit alpha (502 aa).

An ATP-binding site is contributed by 169–176 (GDKQTGKT).

The protein belongs to the ATPase alpha/beta chains family. In terms of assembly, F-type ATPases have 2 components, CF(1) - the catalytic core - and CF(0) - the membrane proton channel. CF(1) has five subunits: alpha(3), beta(3), gamma(1), delta(1), epsilon(1). CF(0) has three main subunits: a(1), b(2) and c(9-12). The alpha and beta chains form an alternating ring which encloses part of the gamma chain. CF(1) is attached to CF(0) by a central stalk formed by the gamma and epsilon chains, while a peripheral stalk is formed by the delta and b chains.

Its subcellular location is the cell membrane. It carries out the reaction ATP + H2O + 4 H(+)(in) = ADP + phosphate + 5 H(+)(out). Functionally, produces ATP from ADP in the presence of a proton gradient across the membrane. The alpha chain is a regulatory subunit. The protein is ATP synthase subunit alpha of Lachnoclostridium phytofermentans (strain ATCC 700394 / DSM 18823 / ISDg) (Clostridium phytofermentans).